The following is a 439-amino-acid chain: Ribosomal protein uS12 methylthiotransferase RimO (439 aa).

Residues 2-114 (SKLYLMSLGC…IDEMILKKTN (113 aa)) form the MTTase N-terminal domain. Positions 11, 45, 77, 146, 150, and 153 each coordinate [4Fe-4S] cluster. A Radical SAM core domain is found at 132-363 (TGSNSHAFIK…VDEVIEKSFE (232 aa)).

Belongs to the methylthiotransferase family. RimO subfamily. [4Fe-4S] cluster is required as a cofactor.

It localises to the cytoplasm. The enzyme catalyses L-aspartate(89)-[ribosomal protein uS12]-hydrogen + (sulfur carrier)-SH + AH2 + 2 S-adenosyl-L-methionine = 3-methylsulfanyl-L-aspartate(89)-[ribosomal protein uS12]-hydrogen + (sulfur carrier)-H + 5'-deoxyadenosine + L-methionine + A + S-adenosyl-L-homocysteine + 2 H(+). Its function is as follows. Catalyzes the methylthiolation of an aspartic acid residue of ribosomal protein uS12. The sequence is that of Ribosomal protein uS12 methylthiotransferase RimO from Campylobacter jejuni subsp. jejuni serotype O:6 (strain 81116 / NCTC 11828).